The following is a 397-amino-acid chain: Elongation factor Tu (397 aa).

The tr-type G domain maps to 10 to 206; that stretch reads KPHVNIGTIG…ACDDYIPEPV (197 aa). The interval 19 to 26 is G1; the sequence is GHIDHGKT. Position 19–26 (19–26) interacts with GTP; that stretch reads GHIDHGKT. Residue T26 coordinates Mg(2+). Residues 62–66 are G2; the sequence is GITIS. A G3 region spans residues 83–86; that stretch reads DCPG. GTP contacts are provided by residues 83–87 and 138–141; these read DCPGH and NKAD. The tract at residues 138–141 is G4; it reads NKAD. Residues 176–178 form a G5 region; that stretch reads SAL.

It belongs to the TRAFAC class translation factor GTPase superfamily. Classic translation factor GTPase family. EF-Tu/EF-1A subfamily. As to quaternary structure, monomer.

It localises to the cytoplasm. The catalysed reaction is GTP + H2O = GDP + phosphate + H(+). Its function is as follows. GTP hydrolase that promotes the GTP-dependent binding of aminoacyl-tRNA to the A-site of ribosomes during protein biosynthesis. The sequence is that of Elongation factor Tu from Acidothermus cellulolyticus (strain ATCC 43068 / DSM 8971 / 11B).